Consider the following 364-residue polypeptide: Aromatic prenyltransferase (364 aa).

Residues 1–22 (MDRNQWTLALMALMRFAHRAFI) form the signal peptide. 2 N-linked (GlcNAc...) asparagine glycosylation sites follow: N142 and N337.

This sequence belongs to the aromatic prenyltransferase family.

Functionally, prenyltransferase that attaches isoprenoid moieties to carbon atoms of aromatic substrates in an enzyme-catalyzed Friedel-Crafts reaction. This Talaromyces marneffei (strain ATCC 18224 / CBS 334.59 / QM 7333) (Penicillium marneffei) protein is Aromatic prenyltransferase.